Consider the following 372-residue polypeptide: Ciliary neurotrophic factor receptor subunit alpha (372 aa).

A signal peptide spans 1–22 (MAASVPWACCAVLAAAAAAVYT). Residues 27–104 (PQEAPHVQYE…WHLRHQVLLH (78 aa)) form the Ig-like C2-type domain. Cysteine 46 and cysteine 89 are oxidised to a cystine. 5 N-linked (GlcNAc...) asparagine glycosylation sites follow: asparagine 60, asparagine 70, asparagine 142, asparagine 190, and asparagine 261. 2 Fibronectin type-III domains span residues 108–205 (PPRE…VKPD) and 206–306 (PPEN…TEEP). A WSXWS motif motif is present at residues 290–294 (WSDWS). The tract at residues 301 to 339 (PWTEEPRHLTTEAQAPETTTSTTSSLAPPPTTKICDPGE) is disordered. Residues 311–326 (TEAQAPETTTSTTSSL) show a composition bias toward low complexity. The GPI-anchor amidated serine moiety is linked to residue serine 342. Positions 343 to 372 (GGGPSIPFLTSVPVTLVLAAAAATANNLLI) are cleaved as a propeptide — removed in mature form.

It belongs to the type I cytokine receptor family. Type 3 subfamily. As to quaternary structure, forms a heterotrimer with LIFR and IL6ST. Interacts with heterodimeric neurotropic cytokine composed of CLCF1/CLC and CRLF1/CLF-1. Either alone or in complex with the heterodimer CLCF1-CRLF1 interacts with SORL1; this interaction may promote internalization and lysosomal degradation. Nervous system.

The protein localises to the cell membrane. In terms of biological role, binds to CNTF. The alpha subunit provides the receptor specificity. The protein is Ciliary neurotrophic factor receptor subunit alpha (Cntfr) of Rattus norvegicus (Rat).